We begin with the raw amino-acid sequence, 370 residues long: MTERIGKIQTIKGLIEKDELGITHMHEHIFINYLDYFEKPNEQELKMCCLGGGSGSGNSNSNKTIEDLSNEKISLINNHWVQYNYNKNLHNLQLNEMEIAIRELEMFKRNGGSTIVEVTTKGIGRDPLQCLKVSQELNINIVMGAGYYLDKSISQFVQSMTEKQMEDEIVKQCLIGIDDTSIKAGIIGEVGCSFPLTNNEKKSLIASAKAQQRTGLSISIHPGRSQTAPLEIIQILKDSGADLSRVIIGHIDRTIHDINILLETAKTGCILEFDLFGMEISHYPFGGEVGMPSDNQRIEWIYQLIKHGYGENIVISHDIYTKHRLVSYGGHGYSHILFNIIPRMKKFGYSDTDINNILINNPKRLLTIIK.

His-26, His-28, Glu-189, His-221, His-250, and Asp-318 together coordinate a divalent metal cation.

It belongs to the metallo-dependent hydrolases superfamily. Phosphotriesterase family. The cofactor is a divalent metal cation.

Its subcellular location is the cytoplasm. The protein localises to the cytosol. It carries out the reaction N-acetyltaurine + H2O = taurine + acetate. N-acetyltaurine hydrolase catalyzes the hydrolysis of N-acetyltaurine into taurine and acetate. The polypeptide is N-acetyltaurine hydrolase (pter) (Dictyostelium discoideum (Social amoeba)).